A 782-amino-acid chain; its full sequence is Coiled-coil alpha-helical rod protein 1 (782 aa).

Basic and acidic residues-rich tracts occupy residues 62-74 (ERDVSSDRQEPGR) and 208-218 (ETRRAGEAKEL). Disordered stretches follow at residues 62–82 (ERDVSSDRQEPGRRGRSWGLE) and 177–218 (EQLS…AKEL). Coiled-coil stretches lie at residues 111 to 303 (LRET…SLTH), 344 to 437 (LMVQ…NAVS), and 498 to 691 (VTDV…QQEG).

Found in all tissues tested, abundantly expressed in heart, liver, skeletal muscle, kidney and pancreas, and to a lesser extent in lung and placenta. Overexpressed in keratinocytes of psoriatic lesions.

Its subcellular location is the cytoplasm. It localises to the nucleus. May be a regulator of keratinocyte proliferation or differentiation. The polypeptide is Coiled-coil alpha-helical rod protein 1 (CCHCR1) (Homo sapiens (Human)).